The chain runs to 308 residues: MGVEIPVGRKATVKVPASTANLGPGFDTLGLALGLYDYVTAEVIESGLEVEVTGEGEGEVPLDERHLVVRALRATLKEADVTVPGLRVSCTNSIPQSRGLGSSAAAATAGVAAGNGLAGFTLDDQAQVQIASTFEGHPDNAGASVLGAGVVSWTNTPIDGVSAPAYHARRIDVHPDIKATAFIPDFHASTEAIRRVLPSDISHVDARFNVSRTAVMTVALRDDPDLLWEGTRDRMHQTYRAEVLPVTAEWVNRLRNLGYPAFLSGAGPTILVLSTEPVDNALVEEARGRGMKVLELGIAGPVEVDVTG.

95-105 contacts ATP; sequence PQSRGLGSSAA.

This sequence belongs to the GHMP kinase family. Homoserine kinase subfamily.

It localises to the cytoplasm. It catalyses the reaction L-homoserine + ATP = O-phospho-L-homoserine + ADP + H(+). It participates in amino-acid biosynthesis; L-threonine biosynthesis; L-threonine from L-aspartate: step 4/5. In terms of biological role, catalyzes the ATP-dependent phosphorylation of L-homoserine to L-homoserine phosphate. This is Homoserine kinase from Corynebacterium jeikeium (strain K411).